The following is a 208-amino-acid chain: Uracil phosphoribosyltransferase (208 aa).

5-phospho-alpha-D-ribose 1-diphosphate-binding positions include Arg78, Arg103, and 130-138; that span reads DPMLATGGS. Uracil-binding positions include Ile193 and 198–200; that span reads GDA. Asp199 provides a ligand contact to 5-phospho-alpha-D-ribose 1-diphosphate.

It belongs to the UPRTase family. Mg(2+) serves as cofactor.

The catalysed reaction is UMP + diphosphate = 5-phospho-alpha-D-ribose 1-diphosphate + uracil. The protein operates within pyrimidine metabolism; UMP biosynthesis via salvage pathway; UMP from uracil: step 1/1. With respect to regulation, allosterically activated by GTP. Catalyzes the conversion of uracil and 5-phospho-alpha-D-ribose 1-diphosphate (PRPP) to UMP and diphosphate. The sequence is that of Uracil phosphoribosyltransferase from Actinobacillus succinogenes (strain ATCC 55618 / DSM 22257 / CCUG 43843 / 130Z).